Reading from the N-terminus, the 513-residue chain is MQLNPSEISELLKSRIEGLGASADIRTQGTVVSVTDGITRIHGLSDVMQGEMLEFPNNVFGVALNLERDSVGAVILGDYTGVSEGDQVKTTGRILEVPVGPELKGRVVNTLGVPIDGKGPIDTKETDIIEKVAPGVIARRSVSQPLQTGIKAIDSMVPIGRGQRELIIGDRQTGKTAVAVDTIISQKGKGVTCVYVAIGQKASTINNVVRKLEEHGAMEYTIVVAASASDSAAMQYLAAYAGCTMGEYFRDRGEDALIIYDDLTKQAWAYRQVSLLLRRPPGREAYPGDVFYLHSRLLERAARVNEEYVEKFTNGAVKGKTGSLTALPIIETQAGDVSAFVPTNVISITDGQIFLETDLFNAGVRPAINAGISVSRVGGAAQTKVIKKLSGGIRTDLAQYRELAAFAQFASDLDDATRRQLERGKRVVELLKQPQYQPLQVWELAVTLYTVNNGYLDDVDVAQVLAFEKSLKDQLKAKHAALIQRIEDTKELSKDDEAELAAAIQDFKKHGAF.

An ATP-binding site is contributed by 169–176; that stretch reads GDRQTGKT.

Belongs to the ATPase alpha/beta chains family. In terms of assembly, F-type ATPases have 2 components, CF(1) - the catalytic core - and CF(0) - the membrane proton channel. CF(1) has five subunits: alpha(3), beta(3), gamma(1), delta(1), epsilon(1). CF(0) has three main subunits: a(1), b(2) and c(9-12). The alpha and beta chains form an alternating ring which encloses part of the gamma chain. CF(1) is attached to CF(0) by a central stalk formed by the gamma and epsilon chains, while a peripheral stalk is formed by the delta and b chains.

Its subcellular location is the cell inner membrane. The enzyme catalyses ATP + H2O + 4 H(+)(in) = ADP + phosphate + 5 H(+)(out). Produces ATP from ADP in the presence of a proton gradient across the membrane. The alpha chain is a regulatory subunit. This Bordetella petrii (strain ATCC BAA-461 / DSM 12804 / CCUG 43448) protein is ATP synthase subunit alpha.